The primary structure comprises 735 residues: 2-5A-dependent ribonuclease (735 aa).

The disordered stretch occupies residues 1–21 (METPDYNTPQGGTPSAGSQRT). ANK repeat units follow at residues 24–53 (EDDSSLIKAVQKGDVVRVQQLLEKGADANA), 58–87 (WGWTPLHNAVQAGRVDIVNLLLSHGADPHR), 91–120 (NGATPFIIAGIQGDVKLLEILLSCGADVNE), 124–153 (NGFTAFMEAAERGNAEALRFLFAKGANVNL), 167–197 (GGATALMSAAEKGHLEVLRILLNDMKAEVDA), 201–234 (MGRNALIRTLLNWDCENVEEITSILIQHGADVNV), 238–268 (RGKTPLIAAVERKHTGLVQMLLSREGINIDA), 272–301 (EGKTALLIAVDKQLKEIVQLLLEKGADKCD), and 303–328 (LVWIARRNHDYHLVKLLLPYVANPDT). Residues 26 to 51 (DSSLIKAVQKGDVVRVQQLLEKGADA) are binding to TMEV Leader protein. 2-5A binding (P-loop) regions lie at residues 229–242 (GADVNVRGERGKTP) and 253–275 (GLVQMLLSREGINIDARDNEGKT). A Protein kinase domain is found at 364–584 (IHDDYKIAGT…LVDLLGHPFF (221 aa)). A C6-type zinc finger spans residues 401 to 436 (CKEVSCLRDCGDHSNLVAFYGREDDKGCLYVCVSLC). Residues 587–722 (WENRYRTLRN…KHFPQPPPRL (136 aa)) form the KEN domain. Residues 714–735 (HFPQPPPRLSVPEAVGPGGIQS) form a disordered region.

The protein belongs to the protein kinase superfamily. As to quaternary structure, (Microbial infection) Interacts (via N-terminus) with TMEV leader protein; this interaction prevents RNASEL activation by its substrate 2'-5' oligoadenylates. In terms of assembly, monomer (inactive form) or homodimer. Interacts with ABCE1; this interaction inhibits the RNASEL. It depends on Mn(2+) as a cofactor. Mg(2+) is required as a cofactor. Expressed in spleen, thymus, lung, testis, kidney, liver and heart.

Its subcellular location is the cytoplasm. It is found in the mitochondrion. With respect to regulation, after binding to 2-5A (5'-phosphorylated 2',5'-linked oligoadenylates) the homodimerization and subsequent activation occurs. Inhibited by RNASEL inhibitor ABCE1/RLI, a cytoplasmic member of the ATP-binding cassette (ABC) transporter family. Functionally, endoribonuclease that functions in the interferon (IFN) antiviral response. In INF treated and virus infected cells, RNASEL probably mediates its antiviral effects through a combination of direct cleavage of single-stranded viral RNAs, inhibition of protein synthesis through the degradation of rRNA, induction of apoptosis, and induction of other antiviral genes. RNASEL mediated apoptosis is the result of a JNK-dependent stress-response pathway leading to cytochrome c release from mitochondria and caspase-dependent apoptosis. Therefore, activation of RNASEL could lead to elimination of virus infected cells under some circumstances. In the crosstalk between autophagy and apoptosis proposed to induce autophagy as an early stress response to small double-stranded RNA and at later stages of prolonged stress to activate caspase-dependent proteolytic cleavage of BECN1 to terminate autophagy and promote apoptosis. Might play a central role in the regulation of mRNA turnover. Cleaves 3' of UpNp dimers, with preference for UU and UA sequences, to sets of discrete products ranging from between 4 and 22 nucleotides in length. The protein is 2-5A-dependent ribonuclease (Rnasel) of Mus musculus (Mouse).